Here is a 152-residue protein sequence, read N- to C-terminus: Deoxyuridine 5'-triphosphate nucleotidohydrolase (152 aa).

Substrate is bound by residues 71 to 73 (RSG), N84, 88 to 90 (LID), and M98.

Belongs to the dUTPase family. Mg(2+) is required as a cofactor.

The catalysed reaction is dUTP + H2O = dUMP + diphosphate + H(+). The protein operates within pyrimidine metabolism; dUMP biosynthesis; dUMP from dCTP (dUTP route): step 2/2. Functionally, this enzyme is involved in nucleotide metabolism: it produces dUMP, the immediate precursor of thymidine nucleotides and it decreases the intracellular concentration of dUTP so that uracil cannot be incorporated into DNA. This chain is Deoxyuridine 5'-triphosphate nucleotidohydrolase, found in Aeromonas salmonicida (strain A449).